Here is a 426-residue protein sequence, read N- to C-terminus: Serine--tRNA ligase (426 aa).

233–235 provides a ligand contact to L-serine; sequence TAE. An ATP-binding site is contributed by 264–266; sequence RSE. An L-serine-binding site is contributed by Glu287. 351–354 is an ATP binding site; the sequence is EISS. Position 387 (Ser387) interacts with L-serine.

It belongs to the class-II aminoacyl-tRNA synthetase family. Type-1 seryl-tRNA synthetase subfamily. In terms of assembly, homodimer. The tRNA molecule binds across the dimer.

The protein resides in the cytoplasm. The catalysed reaction is tRNA(Ser) + L-serine + ATP = L-seryl-tRNA(Ser) + AMP + diphosphate + H(+). It catalyses the reaction tRNA(Sec) + L-serine + ATP = L-seryl-tRNA(Sec) + AMP + diphosphate + H(+). Its pathway is aminoacyl-tRNA biosynthesis; selenocysteinyl-tRNA(Sec) biosynthesis; L-seryl-tRNA(Sec) from L-serine and tRNA(Sec): step 1/1. Functionally, catalyzes the attachment of serine to tRNA(Ser). Is also able to aminoacylate tRNA(Sec) with serine, to form the misacylated tRNA L-seryl-tRNA(Sec), which will be further converted into selenocysteinyl-tRNA(Sec). The polypeptide is Serine--tRNA ligase (Azotobacter vinelandii (strain DJ / ATCC BAA-1303)).